The chain runs to 238 residues: MVNLNDAYEIARYIKEVKKKTPVKVYVNTNSLHFQSTDKFKVFGSNGSYIFVGDYEDIMEVLDKHGNDITDTHVEYDRRNSAIPLKNTLSEHARIEPGAIIRDMVTIEKNAVVMMGAVINIGAVIGEGSMVDMNAVIGARGTLGKNVHLGAGAVVAGVLEPPSATPVIVEDDVLIGANAVILEGVRIGKGAVVAAGAVVTTDVEAGAVVAGSPAKVIKMKDEKTADKTKLMEDLRNLD.

Belongs to the transferase hexapeptide repeat family. DapH subfamily.

It carries out the reaction (S)-2,3,4,5-tetrahydrodipicolinate + acetyl-CoA + H2O = L-2-acetamido-6-oxoheptanedioate + CoA. It functions in the pathway amino-acid biosynthesis; L-lysine biosynthesis via DAP pathway; LL-2,6-diaminopimelate from (S)-tetrahydrodipicolinate (acetylase route): step 1/3. In terms of biological role, catalyzes the transfer of an acetyl group from acetyl-CoA to tetrahydrodipicolinate. This Clostridioides difficile (strain 630) (Peptoclostridium difficile) protein is 2,3,4,5-tetrahydropyridine-2,6-dicarboxylate N-acetyltransferase.